Consider the following 210-residue polypeptide: QAGYGNCQACCTGGQAGPPGMPGNPGRPGNPGAPGIPGNPGRPPVQPCDPIPIPPCKPCPQGRPGPPGPIGPPGEPGTPGNPGAPGNDAPPGPPGPKGPPGPPGKAGAPGAAGQPGANAPSEPLVPGPPGPPGPTGPEGPPGPNGAPGHPGAPGAPGEKGPRGQDGHPGAPGNAGHPGQPGQPGPPGERGVCPKYCSMDGGVFFEDGTRR.

Residues 11-210 (CTGGQAGPPG…GVFFEDGTRR (200 aa)) are disordered. Composition is skewed to pro residues over residues 40–76 (PGRP…PGEP) and 88–103 (DAPP…PGPP). The segment covering 105–122 (KAGAPGAAGQPGANAPSE) has biased composition (low complexity). Residues 123-144 (PLVPGPPGPPGPTGPEGPPGPN) show a composition bias toward pro residues. The segment covering 167 to 179 (HPGAPGNAGHPGQ) has biased composition (low complexity).

This sequence belongs to the cuticular collagen family.

In terms of biological role, nematode cuticles are composed largely of collagen-like proteins. The cuticle functions both as an exoskeleton and as a barrier to protect the worm from its environment. The chain is Cuticle collagen 2C (2C) from Haemonchus contortus (Barber pole worm).